The chain runs to 349 residues: MSEVKSRKKSGTKGAPAEPGKRNEGGKSPEARGGGGRGWADPRTGVSLLSLGTCLGLAWFVFQQSEKFAKVENQYQLLKMETSEFQGLQSKISLISEKCQKSEAIIEQLKAFQIITHLKHLQEEIYEVKTWSSRISEKQDILNNNLTTVSQDVAKADQSTTSMAKDIGLKITTIKTDIRRMSGLVTDVTSLTDSVQELENKIEKVEKNTVKNIGDLLSSSIDRTAMLRKTASENSQRINSVKKILSELQGDFNKHTDRLLSLESDRAKVLKTVTFANDLKPKVYNLKKDFSRLEPLVNDLTLRIGRLVTDLQQREKEIAFLKEKISNLTTVRAEIKDMKDEIKHISDMD.

Residues M1–G11 are compositionally biased toward basic residues. The tract at residues M1–W39 is disordered. Over residues P19 to E30 the composition is skewed to basic and acidic residues. The chain crosses the membrane as a helical span at residues G45 to V61. N145 is a glycosylation site (N-linked (GlcNAc...) asparagine). 2 coiled-coil regions span residues G183–L216 and I304–D347. N327 is a glycosylation site (N-linked (GlcNAc...) asparagine).

Post-translationally, N-glycosylated.

The protein localises to the endoplasmic reticulum membrane. Its function is as follows. Target of p53/TP53 with pro-apoptotic function. This chain is Inhibitor of nuclear factor kappa-B kinase-interacting protein (IKBIP), found in Bos taurus (Bovine).